A 388-amino-acid chain; its full sequence is Tetratricopeptide repeat protein 4 (388 aa).

Met1 is modified (N-acetylmethionine). Residue Ser51 is modified to Phosphoserine. TPR repeat units lie at residues 79–112, 117–150, and 151–184; these read ARTY…KCAD, AVLY…KPCH, and LKAI…DATE. Position 244 is a phosphoserine (Ser244).

Belongs to the TTC4 family. As to quaternary structure, interacts (via TPR repeats) with HSP90AB1. Interacts with HSPA8, CDC6, TBK1 and MSL1.

It is found in the nucleus. Its subcellular location is the nucleoplasm. It localises to the cytoplasm. In terms of biological role, may act as a co-chaperone for HSP90AB1. The protein is Tetratricopeptide repeat protein 4 (TTC4) of Bos taurus (Bovine).